Consider the following 232-residue polypeptide: MAQSKRVKAIAAAVAPGKAYAFEDAIKILKTATKAKFVESIDVAVRLGVDAKKSDQQVRGSTVLPAGTGKSVRVAVFAPAGAKADEALAAGAEAVGMDDLAEKMQAGDLSYDVVIATPDAMRVVGKLGTLLGPRGLMPNPKVGTVSANPGEAVKNAKSGQVRYRTDKASIIHCTIGKASFDDEALKSNLQALLLDLVKAKPATSKGTYLQKVSVSSTMGPGVTVDQSSLSLK.

The protein belongs to the universal ribosomal protein uL1 family. Part of the 50S ribosomal subunit.

Binds directly to 23S rRNA. The L1 stalk is quite mobile in the ribosome, and is involved in E site tRNA release. In terms of biological role, protein L1 is also a translational repressor protein, it controls the translation of the L11 operon by binding to its mRNA. In Xanthomonas oryzae pv. oryzae (strain KACC10331 / KXO85), this protein is Large ribosomal subunit protein uL1.